The primary structure comprises 104 residues: uncharacterized protein (104 aa).

Residues 42 to 104 (ARDSFDQDFE…AREERHKLGR (63 aa)) adopt a coiled-coil conformation.

Belongs to the WXG100 family.

This is an uncharacterized protein from Bacillus subtilis (strain 168).